Here is a 320-residue protein sequence, read N- to C-terminus: Probable NAD(P)H-dependent D-xylose reductase xyl1 (320 aa).

Tyr50 (proton donor) is an active-site residue. His112 contacts substrate. NAD(+) contacts are provided by residues 167–168 (SN), 216–225 (SSFGPLSFLE), and 272–282 (KSNNPTRLSQN).

Belongs to the aldo/keto reductase family.

The enzyme catalyses xylitol + NAD(+) = D-xylose + NADH + H(+). It catalyses the reaction xylitol + NADP(+) = D-xylose + NADPH + H(+). It participates in carbohydrate metabolism; D-xylose degradation. In terms of biological role, catalyzes the initial reaction in the xylose utilization pathway by reducing D-xylose into xylitol. Xylose is a major component of hemicelluloses such as xylan. Most fungi utilize D-xylose via three enzymatic reactions, xylose reductase (XR), xylitol dehydrogenase (XDH), and xylulokinase, to form xylulose 5-phosphate, which enters pentose phosphate pathway. The protein is Probable NAD(P)H-dependent D-xylose reductase xyl1 (xyl1) of Aspergillus terreus (strain NIH 2624 / FGSC A1156).